Consider the following 223-residue polypeptide: Deoxyribose-phosphate aldolase (223 aa).

Residue D92 is the Proton donor/acceptor of the active site. K154 serves as the catalytic Schiff-base intermediate with acetaldehyde. K182 acts as the Proton donor/acceptor in catalysis.

The protein belongs to the DeoC/FbaB aldolase family. DeoC type 1 subfamily.

The protein localises to the cytoplasm. It catalyses the reaction 2-deoxy-D-ribose 5-phosphate = D-glyceraldehyde 3-phosphate + acetaldehyde. Its pathway is carbohydrate degradation; 2-deoxy-D-ribose 1-phosphate degradation; D-glyceraldehyde 3-phosphate and acetaldehyde from 2-deoxy-alpha-D-ribose 1-phosphate: step 2/2. In terms of biological role, catalyzes a reversible aldol reaction between acetaldehyde and D-glyceraldehyde 3-phosphate to generate 2-deoxy-D-ribose 5-phosphate. This chain is Deoxyribose-phosphate aldolase, found in Pasteurella multocida (strain Pm70).